The sequence spans 298 residues: Max-like protein X (298 aa).

Residues 1 to 63 (MTEPGASPED…PRGCREDSSH (63 aa)) are disordered. At Ser7 the chain carries Phosphoserine. A compositionally biased stretch (basic residues) spans 28–37 (GRARARRGAG). Ser45, Ser48, Ser74, Ser77, and Ser98 each carry phosphoserine. Residues 91-145 (SVVSRANSIGSTSASSVPNTDDEDSDYHQEAYKESYKDRRRRAHTQAEQKRRDAI) are disordered. Residues 94–109 (SRANSIGSTSASSVPN) are compositionally biased toward polar residues. Composition is skewed to basic and acidic residues over residues 116–127 (DYHQEAYKESYK) and 135–145 (TQAEQKRRDAI). Positions 129–187 (RRRRAHTQAEQKRRDAIKRGYDDLQTIVPTCQQQDFSIGSQKLSKAIVLQKTIDYIQFL) constitute a bHLH domain. The segment at 140-160 (KRRDAIKRGYDDLQTIVPTCQ) is leucine-zipper.

Efficient DNA binding requires dimerization with another bHLH protein. Binds DNA as a heterodimer with MAD1, MAD4, MNT, WBSCR14 and MLXIP. Can also bind DNA as a homodimer. In terms of tissue distribution, expressed in all tissues tested, including spleen, thymus, prostate, ovary, intestine, colon, peripheral blood leukocyte, heart, liver, skeletal muscle and kidney. Lower levels of expression in testis, brain, placenta and lung.

Its subcellular location is the cytoplasm. It is found in the nucleus. Its function is as follows. Transcription regulator. Forms a sequence-specific DNA-binding protein complex with MAD1, MAD4, MNT, WBSCR14 and MLXIP which recognizes the core sequence 5'-CACGTG-3'. The TCFL4-MAD1, TCFL4-MAD4, TCFL4-WBSCR14 complexes are transcriptional repressors. Plays a role in transcriptional activation of glycolytic target genes. Involved in glucose-responsive gene regulation. In Homo sapiens (Human), this protein is Max-like protein X (MLX).